A 241-amino-acid polypeptide reads, in one-letter code: Uridylate kinase (241 aa).

15-18 serves as a coordination point for ATP; it reads KLSG. The tract at residues 23 to 28 is involved in allosteric activation by GTP; the sequence is GSEGFG. Position 57 (glycine 57) interacts with UMP. ATP is bound by residues glycine 58 and arginine 62. UMP contacts are provided by residues aspartate 77 and 138–145; that span reads TGNPFFTT. Residues threonine 165, phenylalanine 171, and aspartate 174 each coordinate ATP.

This sequence belongs to the UMP kinase family. As to quaternary structure, homohexamer.

Its subcellular location is the cytoplasm. The catalysed reaction is UMP + ATP = UDP + ADP. It participates in pyrimidine metabolism; CTP biosynthesis via de novo pathway; UDP from UMP (UMPK route): step 1/1. With respect to regulation, allosterically activated by GTP. Inhibited by UTP. Catalyzes the reversible phosphorylation of UMP to UDP. The protein is Uridylate kinase of Vibrio vulnificus (strain CMCP6).